The primary structure comprises 242 residues: 1-(5-phosphoribosyl)-5-[(5-phosphoribosylamino)methylideneamino] imidazole-4-carboxamide isomerase (242 aa).

The active-site Proton acceptor is the aspartate 8. The Proton donor role is filled by aspartate 129.

It belongs to the HisA/HisF family.

Its subcellular location is the cytoplasm. It carries out the reaction 1-(5-phospho-beta-D-ribosyl)-5-[(5-phospho-beta-D-ribosylamino)methylideneamino]imidazole-4-carboxamide = 5-[(5-phospho-1-deoxy-D-ribulos-1-ylimino)methylamino]-1-(5-phospho-beta-D-ribosyl)imidazole-4-carboxamide. It participates in amino-acid biosynthesis; L-histidine biosynthesis; L-histidine from 5-phospho-alpha-D-ribose 1-diphosphate: step 4/9. This chain is 1-(5-phosphoribosyl)-5-[(5-phosphoribosylamino)methylideneamino] imidazole-4-carboxamide isomerase, found in Clostridium botulinum (strain Okra / Type B1).